The chain runs to 635 residues: Threonine--tRNA ligase (635 aa).

In terms of domain architecture, TGS spans 1–61; that stretch reads MIAITLPDGS…EQNVDLAIVT (61 aa). Residues 242 to 533 form a catalytic region; sequence DHRKLGKLLD…LLENHAGALP (292 aa). Positions 333, 384, and 510 each coordinate Zn(2+).

It belongs to the class-II aminoacyl-tRNA synthetase family. Homodimer. Requires Zn(2+) as cofactor.

Its subcellular location is the cytoplasm. It catalyses the reaction tRNA(Thr) + L-threonine + ATP = L-threonyl-tRNA(Thr) + AMP + diphosphate + H(+). Its function is as follows. Catalyzes the attachment of threonine to tRNA(Thr) in a two-step reaction: L-threonine is first activated by ATP to form Thr-AMP and then transferred to the acceptor end of tRNA(Thr). Also edits incorrectly charged L-seryl-tRNA(Thr). The polypeptide is Threonine--tRNA ligase (Ralstonia nicotianae (strain ATCC BAA-1114 / GMI1000) (Ralstonia solanacearum)).